Here is a 204-residue protein sequence, read N- to C-terminus: MTRLRLLLLLGLLLRVAVCSVNTITLCKIGEFKHENLCCLQCSAGTYLRNPCQENHNKSECAPCDSEHFIDHKNRESECFPCSVCRDDQEEVAKCSRTADRVCQCKQGTYCDSENCLERCHTCSSCPDGRVVRKCNATMDTVCDKFDSEPGQSGSQCFCFSKPLGIVVIIAAFIIIIGAVIILILKIICYCKRGENIQLSSTML.

Positions 1–19 (MTRLRLLLLLGLLLRVAVC) are cleaved as a signal peptide. Residues 20–164 (SVNTITLCKI…SQCFCFSKPL (145 aa)) are Extracellular-facing. 9 cysteine pairs are disulfide-bonded: Cys-27-Cys-38, Cys-39-Cys-52, Cys-42-Cys-61, Cys-64-Cys-79, Cys-82-Cys-95, Cys-85-Cys-103, Cys-105-Cys-120, Cys-123-Cys-135, and Cys-126-Cys-143. TNFR-Cys repeat units lie at residues 27-61 (CKIGEFKHENLCCLQCSAGTYLRNPCQENHNKSEC), 63-103 (PCDS…DRVC), and 104-143 (QCKQGTYCDSENCLERCHTCSSCPDGRVVRKCNATMDTVC). N-linked (GlcNAc...) asparagine glycosylation occurs at Asn-57. An N-linked (GlcNAc...) asparagine glycan is attached at Asn-136. Residues 165 to 185 (GIVVIIAAFIIIIGAVIILIL) traverse the membrane as a helical segment. Topologically, residues 186 to 204 (KIICYCKRGENIQLSSTML) are cytoplasmic.

As to expression, expressed in thymus and spleen. Detectable levels in lung.

The protein resides in the membrane. This Mus musculus (Mouse) protein is Tumor necrosis factor receptor superfamily member 26 (Tnfrsf26).